Consider the following 310-residue polypeptide: Malate dehydrogenase (310 aa).

NAD(+)-binding positions include Gly7–Gly12 and Asp32. Residues Arg81 and Arg87 each coordinate substrate. Residues Asn94 and Val117–Asn119 contribute to the NAD(+) site. Substrate is bound by residues Asn119 and Arg150. Catalysis depends on His174, which acts as the Proton acceptor.

It belongs to the LDH/MDH superfamily. MDH type 3 family.

The enzyme catalyses (S)-malate + NAD(+) = oxaloacetate + NADH + H(+). Its function is as follows. Catalyzes the reversible oxidation of malate to oxaloacetate. The protein is Malate dehydrogenase of Chlorobium limicola (strain DSM 245 / NBRC 103803 / 6330).